The chain runs to 84 residues: MAERVAAFLKNVWAKEPVLVASFAIAGLAVILPTLSPYTKYSLMINRATPYNYPVPLRDDGNMPDVPSHPQDPQGPSLEWLKRL.

A2 bears the N-acetylalanine mark. The helical transmembrane segment at 18–38 (VLVASFAIAGLAVILPTLSPY) threads the bilayer. A disordered region spans residues 56-84 (PLRDDGNMPDVPSHPQDPQGPSLEWLKRL).

The protein belongs to the complex I NDUFA3 subunit family. Complex I is composed of 45 different subunits.

The protein localises to the mitochondrion inner membrane. Accessory subunit of the mitochondrial membrane respiratory chain NADH dehydrogenase (Complex I), that is believed not to be involved in catalysis. Complex I functions in the transfer of electrons from NADH to the respiratory chain. The immediate electron acceptor for the enzyme is believed to be ubiquinone. This chain is NADH dehydrogenase [ubiquinone] 1 alpha subcomplex subunit 3 (NDUFA3), found in Bos taurus (Bovine).